Here is a 248-residue protein sequence, read N- to C-terminus: Probable pyridoxal 5'-phosphate synthase subunit pdx2 (248 aa).

70-72 (GES) contacts L-glutamine. Cys-106 (nucleophile) is an active-site residue. Residues Arg-136 and 174-175 (IR) each bind L-glutamine. Residues His-221 and Glu-223 each act as charge relay system in the active site.

This sequence belongs to the glutaminase PdxT/SNO family.

The catalysed reaction is aldehydo-D-ribose 5-phosphate + D-glyceraldehyde 3-phosphate + L-glutamine = pyridoxal 5'-phosphate + L-glutamate + phosphate + 3 H2O + H(+). The enzyme catalyses L-glutamine + H2O = L-glutamate + NH4(+). The protein operates within cofactor biosynthesis; pyridoxal 5'-phosphate biosynthesis. Catalyzes the hydrolysis of glutamine to glutamate and ammonia as part of the biosynthesis of pyridoxal 5'-phosphate. The resulting ammonia molecule is channeled to the active site of pdx1. This is Probable pyridoxal 5'-phosphate synthase subunit pdx2 from Dictyostelium discoideum (Social amoeba).